We begin with the raw amino-acid sequence, 876 residues long: Translation initiation factor IF-2 (876 aa).

The tract at residues 164 to 288 (VEIKEPEEPA…EEPAPHAFSA (125 aa)) is disordered. Over residues 179-219 (AAPVAGPEAVPVAPETPSAAPGETVAAVEAEAAPSQPASTE) the composition is skewed to low complexity. Positions 244-259 (VWKEEKVEKRGLKTRG) are enriched in basic and acidic residues. A tr-type G domain is found at 378 to 547 (ARAPVVTVMG…LLQAEVLELK (170 aa)). Residues 387 to 394 (GHVDHGKT) form a G1 region. 387-394 (GHVDHGKT) provides a ligand contact to GTP. Positions 412-416 (GITQH) are G2. Residues 433–436 (DTPG) form a G3 region. GTP contacts are provided by residues 433–437 (DTPGH) and 487–490 (TKID). The segment at 487–490 (TKID) is G4. The G5 stretch occupies residues 523 to 525 (SAK).

This sequence belongs to the TRAFAC class translation factor GTPase superfamily. Classic translation factor GTPase family. IF-2 subfamily.

It localises to the cytoplasm. In terms of biological role, one of the essential components for the initiation of protein synthesis. Protects formylmethionyl-tRNA from spontaneous hydrolysis and promotes its binding to the 30S ribosomal subunits. Also involved in the hydrolysis of GTP during the formation of the 70S ribosomal complex. In Nitrosospira multiformis (strain ATCC 25196 / NCIMB 11849 / C 71), this protein is Translation initiation factor IF-2.